A 115-amino-acid polypeptide reads, in one-letter code: Divalent-cation tolerance protein CutA (115 aa).

The Cu cation site is built by C19, H86, and H87.

Belongs to the CutA family. In terms of assembly, homotrimer. Cu cation is required as a cofactor.

The protein localises to the cytoplasm. Involved in resistance toward heavy metals. This chain is Divalent-cation tolerance protein CutA, found in Citrobacter koseri (strain ATCC BAA-895 / CDC 4225-83 / SGSC4696).